We begin with the raw amino-acid sequence, 196 residues long: Nucleoside triphosphate pyrophosphatase (196 aa).

The active-site Proton acceptor is Asp-72.

Belongs to the Maf family. It depends on a divalent metal cation as a cofactor.

It is found in the cytoplasm. It catalyses the reaction a ribonucleoside 5'-triphosphate + H2O = a ribonucleoside 5'-phosphate + diphosphate + H(+). The enzyme catalyses a 2'-deoxyribonucleoside 5'-triphosphate + H2O = a 2'-deoxyribonucleoside 5'-phosphate + diphosphate + H(+). Functionally, nucleoside triphosphate pyrophosphatase. May have a dual role in cell division arrest and in preventing the incorporation of modified nucleotides into cellular nucleic acids. The chain is Nucleoside triphosphate pyrophosphatase from Chlamydia muridarum (strain MoPn / Nigg).